The following is a 398-amino-acid chain: MDKEKSPAPPCGGLPPPSPSGRCSAFSEAGPIGHGSDANRMSHDISRMLDNPPKKIGHRRAHSEILTLPDDLSFDSDLGVVGNAADGASFSDETEEDLLSMYLDMDKFNSSATSSAQVGEPSGTAWKNETMMQTGTGSTSNPQNTVNSLGERPRIRHQHSQSMDGSMNINEMLMSGNEDDSAIDAKKSMSATKLAELALIDPKRAKRIWANRQSAARSKERKTRYIFELERKVQTLQTEATTLSAQLTLLQRDTNGLTVENNELKLRLQTMEQQVHLQDELNEALKEEIQHLKVLTGQVAPSALNYGSFGSNQQQFYSNNQSMQTILAAKQFQQLQIHSQKQQQQQQQQQQQHQQQQQQQQQYQFQQQQMQQLMQQRLQQQEQQNGVRLKPSQAQKEN.

Disordered regions lie at residues 1-46 (MDKE…HDIS) and 112-150 (ATSSAQVGEPSGTAWKNETMMQTGTGSTSNPQNTVNSLG). Residues 7-19 (PAPPCGGLPPPSP) are compositionally biased toward pro residues. Residues 125–148 (AWKNETMMQTGTGSTSNPQNTVNS) show a composition bias toward polar residues. Residues 201–264 (DPKRAKRIWA…NGLTVENNEL (64 aa)) enclose the bZIP domain. The tract at residues 203–224 (KRAKRIWANRQSAARSKERKTR) is basic motif. The interval 229-264 (LERKVQTLQTEATTLSAQLTLLQRDTNGLTVENNEL) is leucine-zipper.

The protein belongs to the bZIP family.

Its subcellular location is the nucleus. In terms of biological role, putative transcription factor with an activatory role. In Arabidopsis thaliana (Mouse-ear cress), this protein is Probable transcription factor PosF21 (POSF21).